We begin with the raw amino-acid sequence, 1062 residues long: Suppressor of mar1-1 protein (1062 aa).

Residues 1-17 (MSENTTAPSDNITNEQR) show a composition bias toward polar residues. 6 disordered regions span residues 1-27 (MSEN…DDVD), 188-217 (ENSS…ASTS), 267-337 (TKQE…KKRT), 370-398 (SSKF…SATQ), 595-634 (EIST…QQEG), and 681-804 (SGEE…GNLG). An N-acetylserine modification is found at Ser2. Over residues 189–205 (NSSNNTSSQHNTSSSRR) the composition is skewed to low complexity. Polar residues-rich tracts occupy residues 267-279 (TKQE…APSS), 287-298 (SLTSVPQRTNNE), and 305-323 (STAN…NNLI). Basic residues predominate over residues 325 to 335 (IKRKRGRPPKK). 2 stretches are compositionally biased toward polar residues: residues 370–385 (SSKF…NPVS) and 610–629 (TKGS…GISD). A phosphoserine mark is found at Ser378, Ser379, Ser628, and Ser681. A compositionally biased stretch (basic and acidic residues) spans 685 to 699 (AITKENAEYERKTPG). Thr697 carries the post-translational modification Phosphothreonine. Polar residues predominate over residues 704–716 (TTFVPLENSQPSD). Position 712 is a phosphoserine; by ATM or ATR (Ser712). Ser738 is subject to Phosphoserine. Over residues 781-793 (KGTSSIHNDTESA) the composition is skewed to polar residues. Thr817 carries the phosphothreonine modification.

Interacts with RFM1. This interaction is required to recruit HST1.

The protein localises to the nucleus. In terms of biological role, DNA-binding protein that specifically binds the regulatory region of middle sporulation genes (MSE). Required for the repression of middle sporulation genes during vegetative growth. Represses expression via the recruitment of histone deacetylase HST1. This Saccharomyces cerevisiae (strain ATCC 204508 / S288c) (Baker's yeast) protein is Suppressor of mar1-1 protein (SUM1).